A 462-amino-acid chain; its full sequence is Glutamate--tRNA ligase (462 aa).

Positions 11 to 21 (PSPTGFIHLGN) match the 'HIGH' region motif. Over residues 120-131 (KPRYDGTWRPEP) the composition is skewed to basic and acidic residues. Residues 120 to 140 (KPRYDGTWRPEPGKTLPPIPA) are disordered. A 'KMSKS' region motif is present at residues 243–247 (KMSKR). Residue Lys-246 coordinates ATP.

This sequence belongs to the class-I aminoacyl-tRNA synthetase family. Glutamate--tRNA ligase type 1 subfamily. As to quaternary structure, monomer.

The protein localises to the cytoplasm. The catalysed reaction is tRNA(Glu) + L-glutamate + ATP = L-glutamyl-tRNA(Glu) + AMP + diphosphate. Its function is as follows. Catalyzes the attachment of glutamate to tRNA(Glu) in a two-step reaction: glutamate is first activated by ATP to form Glu-AMP and then transferred to the acceptor end of tRNA(Glu). The chain is Glutamate--tRNA ligase from Polaromonas sp. (strain JS666 / ATCC BAA-500).